The sequence spans 317 residues: Retinol dehydrogenase 16 (317 aa).

Position 33–57 (33–57 (FITGCDSGFGTLLARQLDRRGMRVL)) interacts with NAD(+). The active-site Proton acceptor is the Tyr176. A helical membrane pass occupies residues 289–309 (LFYLPLSYLPTFLVDALLYWT).

Belongs to the short-chain dehydrogenases/reductases (SDR) family. In terms of assembly, homodimer. Post-translationally, not glycosylated.

It is found in the endoplasmic reticulum membrane. Its subcellular location is the microsome membrane. It catalyses the reaction all-trans-retinol--[retinol-binding protein] + NAD(+) = all-trans-retinal--[retinol-binding protein] + NADH + H(+). It carries out the reaction 9-cis-retinol + NAD(+) = 9-cis-retinal + NADH + H(+). The enzyme catalyses 11-cis-retinol + NAD(+) = 11-cis-retinal + NADH + H(+). The catalysed reaction is 13-cis-retinol + NAD(+) = 13-cis-retinal + NADH + H(+). It catalyses the reaction androsterone + NAD(+) = 5alpha-androstan-3,17-dione + NADH + H(+). It carries out the reaction 5alpha-androstane-3alpha,17beta-diol + NAD(+) = 17beta-hydroxy-5alpha-androstan-3-one + NADH + H(+). The protein operates within cofactor metabolism; retinol metabolism. In terms of biological role, oxidoreductase with a preference for NAD. Oxidizes all-trans-retinol, 9-cis-retinol, 11-cis-retinol and 13-cis-retinol to the corresponding aldehydes. Has higher activity towards CRBP-bound retinol than with free retinol. Oxidizes 3-alpha-hydroxysteroids. Oxidizes androstanediol and androsterone to dihydrotestosterone and androstanedione. Can also catalyze the reverse reaction. In Mus musculus (Mouse), this protein is Retinol dehydrogenase 16.